A 180-amino-acid polypeptide reads, in one-letter code: Large ribosomal subunit protein uL10 (180 aa).

Residues S161–E180 form a disordered region. A compositionally biased stretch (acidic residues) spans S166–E180.

The protein belongs to the universal ribosomal protein uL10 family. Part of the ribosomal stalk of the 50S ribosomal subunit. The N-terminus interacts with L11 and the large rRNA to form the base of the stalk. The C-terminus forms an elongated spine to which L12 dimers bind in a sequential fashion forming a multimeric L10(L12)X complex.

Functionally, forms part of the ribosomal stalk, playing a central role in the interaction of the ribosome with GTP-bound translation factors. This is Large ribosomal subunit protein uL10 from Finegoldia magna (strain ATCC 29328 / DSM 20472 / WAL 2508) (Peptostreptococcus magnus).